The sequence spans 627 residues: DEAD-box ATP-dependent RNA helicase 35A (627 aa).

2 stretches are compositionally biased toward low complexity: residues 1-15 and 52-61; these read MAAA…AAAA and SSSAAEAASD. Disordered regions lie at residues 1 to 23 and 40 to 85; these read MAAA…EDNY and LRRL…LEAS. Residues 62-72 show a composition bias toward pro residues; sequence LPPPPPPPPNQ. Positions 182 to 210 match the Q motif motif; the sequence is RDFRDLRLPEPMLRKLREKGIVQPTPIQV. The Helicase ATP-binding domain maps to 213 to 397; that stretch reads LPVVLSGRDM…KSALVKPVIV (185 aa). 226 to 233 provides a ligand contact to ATP; it reads AFTGSGKT. Positions 345 to 348 match the DEAD box motif; the sequence is DEAD. The Helicase C-terminal domain occupies 408–568; that stretch reads DVIQEVEYVK…RIPPVLAELN (161 aa). The CCHC-type zinc-finger motif lies at 584 to 601; it reads KGCAYCGGLGHRVTDCPK.

Belongs to the DEAD box helicase family. DDX41 subfamily.

The enzyme catalyses ATP + H2O = ADP + phosphate + H(+). This chain is DEAD-box ATP-dependent RNA helicase 35A, found in Oryza sativa subsp. japonica (Rice).